The sequence spans 395 residues: PCI domain-containing protein 2 homolog (395 aa).

A PCI domain is found at 208 to 389; that stretch reads ITYKYFVGRR…NKLVVSKQNP (182 aa).

The protein belongs to the CSN12 family. As to quaternary structure, component of the nuclear pore complex (NPC)-associated TREX-2/AMEX complex (anchoring and mRNA export complex), composed of e(y)2, xmas and PCID2. Interaction between the TREX-2/AMEX complex and the ORC complex is required for ORC localization to mRNPs, and consequently mRNA export. Within the TREX-2/AMEX-ORC complex, interacts with Orc3 and Orc4. Interacts with sbr/NXF1. Interacts with Moe. Interacts with nudC; required to maintain stability in the cytoplasm. In terms of processing, mono- and poly-ubiquitinated.

It is found in the nucleus. It localises to the cytoplasm. Its subcellular location is the nucleus membrane. The protein localises to the cytoskeleton. In terms of biological role, required for the export of nuclear mRNAs and involved in mRNA trafficking in the cytoplasm. Component of the nuclear pore complex (NPC)-associated TREX-2/AMEX complex (anchoring and mRNA export complex) which functions in docking export-competent ribonucleoprotein particles (mRNPs) to the nuclear entrance of the nuclear pore complex (nuclear basket), thereby enabling the export of mRNAs to the cytoplasm through the nuclear pores. Within the complex, specifically promotes the association of factors involved in regulating nuclear mRNA export, such as Moe, sbr/NXF1 and the ORC complex, to the mRNPs particles. In the cytoplasm, functions independently of its role in the TREX-2/AMEX complex, to promote cytoplasmic mRNA trafficking together with nudC. Associates with translationally active polysomes. The polypeptide is PCI domain-containing protein 2 homolog (Drosophila melanogaster (Fruit fly)).